A 162-amino-acid chain; its full sequence is Transcription elongation factor GreA (162 aa).

Residues 45–75 (ENAEYEAAREKQAFIEGRIKELEDMAARAEI) are a coiled coil.

Belongs to the GreA/GreB family.

In terms of biological role, necessary for efficient RNA polymerase transcription elongation past template-encoded arresting sites. The arresting sites in DNA have the property of trapping a certain fraction of elongating RNA polymerases that pass through, resulting in locked ternary complexes. Cleavage of the nascent transcript by cleavage factors such as GreA or GreB allows the resumption of elongation from the new 3'terminus. GreA releases sequences of 2 to 3 nucleotides. The chain is Transcription elongation factor GreA from Rickettsia canadensis (strain McKiel).